The chain runs to 499 residues: Cytochrome P450 77A1 (499 aa).

Heme is bound at residue cysteine 443.

This sequence belongs to the cytochrome P450 family. Requires heme as cofactor.

This chain is Cytochrome P450 77A1 (CYP77A1), found in Solanum melongena (Eggplant).